Consider the following 225-residue polypeptide: ATP-dependent dethiobiotin synthetase BioD (225 aa).

15 to 20 serves as a coordination point for ATP; the sequence is EIGKTF. T19 contributes to the Mg(2+) binding site. K40 is an active-site residue. Residues D57, 118–121, 178–179, and 207–209 contribute to the ATP site; these read EGVG, NR, and PHV. Residues D57 and E118 each contribute to the Mg(2+) site.

This sequence belongs to the dethiobiotin synthetase family. As to quaternary structure, homodimer. The cofactor is Mg(2+).

It localises to the cytoplasm. It carries out the reaction (7R,8S)-7,8-diammoniononanoate + CO2 + ATP = (4R,5S)-dethiobiotin + ADP + phosphate + 3 H(+). The protein operates within cofactor biosynthesis; biotin biosynthesis; biotin from 7,8-diaminononanoate: step 1/2. Catalyzes a mechanistically unusual reaction, the ATP-dependent insertion of CO2 between the N7 and N8 nitrogen atoms of 7,8-diaminopelargonic acid (DAPA, also called 7,8-diammoniononanoate) to form a ureido ring. The chain is ATP-dependent dethiobiotin synthetase BioD from Aromatoleum aromaticum (strain DSM 19018 / LMG 30748 / EbN1) (Azoarcus sp. (strain EbN1)).